A 1019-amino-acid polypeptide reads, in one-letter code: Exportin-T (1019 aa).

It belongs to the exportin family.

It localises to the nucleus. The protein resides in the cytoplasm. TRNA nucleus export receptor which facilitates tRNA translocation across the nuclear pore complex. Involved in pre-tRNA splicing, probably by affecting the interaction of pre-tRNA with splicing endonuclease. In Chaetomium globosum (strain ATCC 6205 / CBS 148.51 / DSM 1962 / NBRC 6347 / NRRL 1970) (Soil fungus), this protein is Exportin-T (LOS1).